Consider the following 116-residue polypeptide: Large ribosomal subunit protein uL18 (116 aa).

It belongs to the universal ribosomal protein uL18 family. As to quaternary structure, part of the 50S ribosomal subunit; part of the 5S rRNA/L5/L18/L25 subcomplex. Contacts the 5S and 23S rRNAs.

This is one of the proteins that bind and probably mediate the attachment of the 5S RNA into the large ribosomal subunit, where it forms part of the central protuberance. The chain is Large ribosomal subunit protein uL18 from Pseudoalteromonas translucida (strain TAC 125).